Here is a 358-residue protein sequence, read N- to C-terminus: Alanine racemase (358 aa).

K35 serves as the catalytic Proton acceptor; specific for D-alanine. Residue K35 is modified to N6-(pyridoxal phosphate)lysine. Residue R130 coordinates substrate. Residue Y255 is the Proton acceptor; specific for L-alanine of the active site. M303 contributes to the substrate binding site.

The protein belongs to the alanine racemase family. Requires pyridoxal 5'-phosphate as cofactor.

The enzyme catalyses L-alanine = D-alanine. The protein operates within amino-acid biosynthesis; D-alanine biosynthesis; D-alanine from L-alanine: step 1/1. Functionally, catalyzes the interconversion of L-alanine and D-alanine. May also act on other amino acids. In Shewanella woodyi (strain ATCC 51908 / MS32), this protein is Alanine racemase (alr).